The following is a 380-amino-acid chain: Cytochrome b (380 aa).

The next 4 helical transmembrane spans lie at 34–54 (FGSLLGICLATQILTGLLLAA), 78–99 (WLIRNLHANGASFFFICIYLHI), 114–134 (WNTGVILLLTLMATAFVGYVL), and 179–199 (FFTLHFLLPFMIMGLTLIHLT). 2 residues coordinate heme b: histidine 84 and histidine 98. Positions 183 and 197 each coordinate heme b. Position 202 (histidine 202) interacts with a ubiquinone. 4 helical membrane passes run 227 to 247 (LKDILGFMLMLLPLMTLALFS), 289 to 309 (LGGVLALAASVLILFLAPLLH), 321 to 341 (LSQLLFWTLTANLLILTWVGS), and 348 to 368 (FMIIGQLASLTYFTILLVLFP).

This sequence belongs to the cytochrome b family. In terms of assembly, the cytochrome bc1 complex contains 11 subunits: 3 respiratory subunits (MT-CYB, CYC1 and UQCRFS1), 2 core proteins (UQCRC1 and UQCRC2) and 6 low-molecular weight proteins (UQCRH/QCR6, UQCRB/QCR7, UQCRQ/QCR8, UQCR10/QCR9, UQCR11/QCR10 and a cleavage product of UQCRFS1). This cytochrome bc1 complex then forms a dimer. It depends on heme b as a cofactor.

The protein resides in the mitochondrion inner membrane. In terms of biological role, component of the ubiquinol-cytochrome c reductase complex (complex III or cytochrome b-c1 complex) that is part of the mitochondrial respiratory chain. The b-c1 complex mediates electron transfer from ubiquinol to cytochrome c. Contributes to the generation of a proton gradient across the mitochondrial membrane that is then used for ATP synthesis. The sequence is that of Cytochrome b (MT-CYB) from Anthropoides virgo (Demoiselle crane).